Here is a 147-residue protein sequence, read N- to C-terminus: Large ribosomal subunit protein uL15 (147 aa).

Residues 1 to 13 show a composition bias toward basic and acidic residues; it reads MELHSLKAAEGSR. The segment at 1-57 is disordered; that stretch reads MELHSLKAAEGSRKVRNRVGRGTSSGNGKTSGRGQKGQKSRSGGGVRPGFEGGQTEL. 2 stretches are compositionally biased toward gly residues: residues 23 to 35 and 42 to 52; these read TSSG…GRGQ and SGGGVRPGFEG.

The protein belongs to the universal ribosomal protein uL15 family. Part of the 50S ribosomal subunit.

In terms of biological role, binds to the 23S rRNA. The sequence is that of Large ribosomal subunit protein uL15 from Lactococcus lactis subsp. cremoris (strain MG1363).